The following is a 389-amino-acid chain: Aspartyl protease UND (389 aa).

An N-terminal signal peptide occupies residues 1-19 (MKTTMNFVFLFFLPLLINA). The region spanning 58-383 (FMAEIHFGSP…DLSAKTAYIN (326 aa)) is the Peptidase A1 domain. The active site involves D76. A disulfide bridge connects residues C86 and C92. Residue N238 is glycosylated (N-linked (GlcNAc...) asparagine). D268 is an active-site residue. C304 and C346 are oxidised to a cystine.

The protein belongs to the peptidase A1 family.

In terms of biological role, probable aspartic protease activated by the transcription factor MYB80. May participate in the regulation of the timing of tapetal programmed cell death (PCD) which is critical for pollen development. This chain is Aspartyl protease UND, found in Arabidopsis thaliana (Mouse-ear cress).